A 217-amino-acid chain; its full sequence is 3,4-dihydroxy-2-butanone 4-phosphate synthase (217 aa).

D-ribulose 5-phosphate contacts are provided by residues 37 to 38, aspartate 42, 150 to 154, and glutamate 174; these read RE and RGGHT. Glutamate 38 contributes to the Mg(2+) binding site. Histidine 153 contributes to the Mg(2+) binding site.

Belongs to the DHBP synthase family. In terms of assembly, homodimer. Mg(2+) serves as cofactor. Mn(2+) is required as a cofactor.

It catalyses the reaction D-ribulose 5-phosphate = (2S)-2-hydroxy-3-oxobutyl phosphate + formate + H(+). It functions in the pathway cofactor biosynthesis; riboflavin biosynthesis; 2-hydroxy-3-oxobutyl phosphate from D-ribulose 5-phosphate: step 1/1. Catalyzes the conversion of D-ribulose 5-phosphate to formate and 3,4-dihydroxy-2-butanone 4-phosphate. This is 3,4-dihydroxy-2-butanone 4-phosphate synthase from Salmonella arizonae (strain ATCC BAA-731 / CDC346-86 / RSK2980).